A 243-amino-acid chain; its full sequence is UPF0502 protein RALTA_B0914 (243 aa).

A compositionally biased stretch (polar residues) spans Met1 to Thr10. The tract at residues Met1–Pro23 is disordered.

It belongs to the UPF0502 family.

The polypeptide is UPF0502 protein RALTA_B0914 (Cupriavidus taiwanensis (strain DSM 17343 / BCRC 17206 / CCUG 44338 / CIP 107171 / LMG 19424 / R1) (Ralstonia taiwanensis (strain LMG 19424))).